We begin with the raw amino-acid sequence, 73 residues long: Large ribosomal subunit protein uL24 (73 aa).

Basic and acidic residues predominate over residues 51–65; the sequence is DDNPKGGFIHKEKPM. The interval 51-73 is disordered; the sequence is DDNPKGGFIHKEKPMHISNVKKA.

It belongs to the universal ribosomal protein uL24 family. Part of the 50S ribosomal subunit.

Functionally, one of two assembly initiator proteins, it binds directly to the 5'-end of the 23S rRNA, where it nucleates assembly of the 50S subunit. Its function is as follows. One of the proteins that surrounds the polypeptide exit tunnel on the outside of the subunit. This chain is Large ribosomal subunit protein uL24, found in Helicobacter pylori (strain Shi470).